Here is a 750-residue protein sequence, read N- to C-terminus: Photosystem I P700 chlorophyll a apoprotein A1 (750 aa).

8 helical membrane-spanning segments follow: residues 70–93, 156–179, 195–219, 291–309, 346–369, 385–411, 433–455, and 531–549; these read VFSAHFGQLSIIFLWLSGMYFHGA, LYCTAIGALVFAALMLFAGWFHYH, LNHHLAGLLGLGSLSWAGHQVHVSL, IAHHHLAIAILFLIAGHMY, WHAQLSLNLAMLGSLTIVVAHHMY, LSLFTHHMWIGGFLIVGAAAHAAIFMV, AIISHLNWACIFLGFHSFGLYIH, and FLVHHIHAFTIHVTVLILL. Cys-573 and Cys-582 together coordinate [4Fe-4S] cluster. A run of 2 helical transmembrane segments spans residues 589 to 610 and 664 to 686; these read HVFLGLFWMYNSISVVIFHFSW and LSAYGLFFLGAHFVWAFSLMFLF. His-675 contributes to the chlorophyll a' binding site. Chlorophyll a contacts are provided by Met-683 and Tyr-691. Residue Trp-692 coordinates phylloquinone. A helical membrane pass occupies residues 724–744; sequence AVGVTHYLLGGIATTWAFFLA.

This sequence belongs to the PsaA/PsaB family. In terms of assembly, the PsaA/B heterodimer binds the P700 chlorophyll special pair and subsequent electron acceptors. PSI consists of a core antenna complex that captures photons, and an electron transfer chain that converts photonic excitation into a charge separation. The eukaryotic PSI reaction center is composed of at least 11 subunits. Requires P700 is a chlorophyll a/chlorophyll a' dimer, A0 is one or more chlorophyll a, A1 is one or both phylloquinones and FX is a shared 4Fe-4S iron-sulfur center. as cofactor.

The protein resides in the plastid. Its subcellular location is the chloroplast thylakoid membrane. It catalyses the reaction reduced [plastocyanin] + hnu + oxidized [2Fe-2S]-[ferredoxin] = oxidized [plastocyanin] + reduced [2Fe-2S]-[ferredoxin]. In terms of biological role, psaA and PsaB bind P700, the primary electron donor of photosystem I (PSI), as well as the electron acceptors A0, A1 and FX. PSI is a plastocyanin-ferredoxin oxidoreductase, converting photonic excitation into a charge separation, which transfers an electron from the donor P700 chlorophyll pair to the spectroscopically characterized acceptors A0, A1, FX, FA and FB in turn. Oxidized P700 is reduced on the lumenal side of the thylakoid membrane by plastocyanin. In Solanum bulbocastanum (Wild potato), this protein is Photosystem I P700 chlorophyll a apoprotein A1.